The primary structure comprises 857 residues: Autoinducer 2 sensor kinase/phosphatase LuxQ (857 aa).

The next 2 membrane-spanning stretches (helical) occupy residues 14 to 34 (IASFITHAVVVVMGVLIVSVL) and 283 to 303 (FWMAFALISMIGVSIASRWWL). Residues 486-706 (KMSHELRTPL…RFEIQLPIEL (221 aa)) form the Histidine kinase domain. His489 is subject to Phosphohistidine; by autocatalysis. Residues 731 to 846 (RVLLVEDNHT…TLHKALEHFK (116 aa)) enclose the Response regulatory domain. Asp780 is subject to 4-aspartylphosphate.

Binds the complex formed by AI-2 and LuxP.

It localises to the cell inner membrane. It catalyses the reaction ATP + protein L-histidine = ADP + protein N-phospho-L-histidine.. In terms of biological role, at low cell density, in absence of AI-2 (autoinducer 2), LuxQ has a kinase activity and autophosphorylates on a histidine residue. The phosphoryl group is then transferred to an aspartate residue in the response regulator domain. The phosphoryl group is transferred to LuxU, and ultimately to LuxO. At high cell density, in the presence of AI-2, the kinase activity is inactivated, and the response regulator domain has a phosphatase activity. This is Autoinducer 2 sensor kinase/phosphatase LuxQ (luxQ) from Vibrio cholerae serotype O1 (strain ATCC 39315 / El Tor Inaba N16961).